A 155-amino-acid chain; its full sequence is uncharacterized protein (155 aa).

The N-terminal 17 residues, 1–17 (MMRGASKRSISSAAVLL), are a transit peptide targeting the mitochondrion. Residues 111–155 (WHRQQKRSQRRRSVAKYEQREEAARVEKEEREARDREMVRELFRR) form a disordered region. The span at 113-124 (RQQKRSQRRRSV) shows a compositional bias: basic residues. A compositionally biased stretch (basic and acidic residues) spans 125–155 (AKYEQREEAARVEKEEREARDREMVRELFRR).

Belongs to the prokaryotic/mitochondrial release factor family.

Its subcellular location is the mitochondrion. This is an uncharacterized protein from Saccharomyces cerevisiae (strain ATCC 204508 / S288c) (Baker's yeast).